A 331-amino-acid chain; its full sequence is Lipoyl synthase (331 aa).

The interval 1–33 is disordered; it reads MSDALIATSSEAPQSPAEQYDPTRKQKSADKTA. A compositionally biased stretch (polar residues) spans 7–17; it reads ATSSEAPQSPA. The segment covering 21 to 33 has biased composition (basic and acidic residues); that stretch reads DPTRKQKSADKTA. Residues cysteine 78, cysteine 83, cysteine 89, cysteine 104, cysteine 108, cysteine 111, and serine 318 each coordinate [4Fe-4S] cluster. In terms of domain architecture, Radical SAM core spans 89–307; the sequence is CFGKGTATFM…EEEAYKMGFT (219 aa).

The protein belongs to the radical SAM superfamily. Lipoyl synthase family. The cofactor is [4Fe-4S] cluster.

It is found in the cytoplasm. The enzyme catalyses [[Fe-S] cluster scaffold protein carrying a second [4Fe-4S](2+) cluster] + N(6)-octanoyl-L-lysyl-[protein] + 2 oxidized [2Fe-2S]-[ferredoxin] + 2 S-adenosyl-L-methionine + 4 H(+) = [[Fe-S] cluster scaffold protein] + N(6)-[(R)-dihydrolipoyl]-L-lysyl-[protein] + 4 Fe(3+) + 2 hydrogen sulfide + 2 5'-deoxyadenosine + 2 L-methionine + 2 reduced [2Fe-2S]-[ferredoxin]. The protein operates within protein modification; protein lipoylation via endogenous pathway; protein N(6)-(lipoyl)lysine from octanoyl-[acyl-carrier-protein]: step 2/2. Its function is as follows. Catalyzes the radical-mediated insertion of two sulfur atoms into the C-6 and C-8 positions of the octanoyl moiety bound to the lipoyl domains of lipoate-dependent enzymes, thereby converting the octanoylated domains into lipoylated derivatives. The polypeptide is Lipoyl synthase (Cupriavidus necator (strain ATCC 17699 / DSM 428 / KCTC 22496 / NCIMB 10442 / H16 / Stanier 337) (Ralstonia eutropha)).